The chain runs to 615 residues: Albumin (615 aa).

The first 18 residues, 1–18, serve as a signal peptide directing secretion; sequence MKWVTLISFIFLFSSATS. A propeptide spanning residues 19 to 23 is cleaved from the precursor; that stretch reads RNLQR. 3 consecutive Albumin domains span residues 22 to 214, 215 to 407, and 408 to 605; these read QRFA…IVMR, EKAK…QLNQ, and HIKE…NLIV. Position 30 (histidine 30) interacts with Cu cation. Ca(2+) is bound by residues glutamate 33 and aspartate 40. Cystine bridges form between cysteine 80-cysteine 89, cysteine 102-cysteine 118, cysteine 117-cysteine 128, cysteine 152-cysteine 197, cysteine 196-cysteine 205, cysteine 228-cysteine 274, and cysteine 273-cysteine 281. Positions 272, 277, 280, and 283 each coordinate Ca(2+). Zn(2+) is bound at residue aspartate 277. Cystine bridges form between cysteine 293-cysteine 307, cysteine 306-cysteine 317, cysteine 344-cysteine 389, cysteine 388-cysteine 397, cysteine 420-cysteine 466, cysteine 465-cysteine 476, cysteine 489-cysteine 505, cysteine 504-cysteine 515, cysteine 542-cysteine 587, and cysteine 586-cysteine 595. N-linked (GlcNAc...) asparagine glycosylation occurs at asparagine 500.

It belongs to the ALB/AFP/VDB family. Plasma.

It localises to the secreted. Binds water, Ca(2+), Na(+), K(+), fatty acids, hormones, bilirubin and drugs. Its main function is the regulation of the colloidal osmotic pressure of blood. This Gallus gallus (Chicken) protein is Albumin (ALB).